We begin with the raw amino-acid sequence, 185 residues long: Elongation factor P (185 aa).

The protein belongs to the elongation factor P family.

It localises to the cytoplasm. It functions in the pathway protein biosynthesis; polypeptide chain elongation. Involved in peptide bond synthesis. Stimulates efficient translation and peptide-bond synthesis on native or reconstituted 70S ribosomes in vitro. Probably functions indirectly by altering the affinity of the ribosome for aminoacyl-tRNA, thus increasing their reactivity as acceptors for peptidyl transferase. The protein is Elongation factor P of Clostridium botulinum (strain Alaska E43 / Type E3).